A 284-amino-acid polypeptide reads, in one-letter code: Tropomyosin (284 aa).

The tract at residues 1-47 is disordered; that stretch reads MDAIKKKMQAMKIEKDNAMDRADAAEEKARQQQERVEKLEEELRDTQ. Positions 1-284 form a coiled coil; sequence MDAIKKKMQA…DQTFQELSGY (284 aa). Residues 12-38 are compositionally biased toward basic and acidic residues; the sequence is KIEKDNAMDRADAAEEKARQQQERVEK.

This sequence belongs to the tropomyosin family. As to quaternary structure, homodimer.

Functionally, tropomyosin, in association with the troponin complex, plays a central role in the calcium dependent regulation of muscle contraction. This is Tropomyosin from Trichinella pseudospiralis (Parasitic roundworm).